The following is a 194-amino-acid chain: Large ribosomal subunit protein eL15 (194 aa).

The span at 162 to 173 shows a compositional bias: basic residues; it reads KTSAGRRARGLH. The tract at residues 162–194 is disordered; that stretch reads KTSAGRRARGLHNRGTGTEKCRPSLTSHKNQGK. Residues 185-194 are compositionally biased toward polar residues; sequence SLTSHKNQGK.

Belongs to the eukaryotic ribosomal protein eL15 family.

The sequence is that of Large ribosomal subunit protein eL15 from Methanocorpusculum labreanum (strain ATCC 43576 / DSM 4855 / Z).